Consider the following 398-residue polypeptide: NADH-quinone oxidoreductase subunit D (398 aa).

It belongs to the complex I 49 kDa subunit family. As to quaternary structure, NDH-1 is composed of 14 different subunits. Subunits NuoB, C, D, E, F, and G constitute the peripheral sector of the complex.

It is found in the cell inner membrane. It carries out the reaction a quinone + NADH + 5 H(+)(in) = a quinol + NAD(+) + 4 H(+)(out). In terms of biological role, NDH-1 shuttles electrons from NADH, via FMN and iron-sulfur (Fe-S) centers, to quinones in the respiratory chain. The immediate electron acceptor for the enzyme in this species is believed to be ubiquinone. Couples the redox reaction to proton translocation (for every two electrons transferred, four hydrogen ions are translocated across the cytoplasmic membrane), and thus conserves the redox energy in a proton gradient. The chain is NADH-quinone oxidoreductase subunit D from Bradyrhizobium sp. (strain ORS 278).